We begin with the raw amino-acid sequence, 789 residues long: Toll-like receptor 6 (789 aa).

The first 31 residues, 1–31 (MTKDKEPIVKNFHLVCIVTLIVGTIIQFSDA), serve as a signal peptide directing secretion. Residues 32 to 587 (DEFAIDMSKT…QLSCSTSLLT (556 aa)) are Extracellular-facing. LRR repeat units follow at residues 54–77 (TKVL…FLSG), 78–101 (LKIL…FNQD), 102–122 (LEYL…PFVN), 123–147 (LKHL…NLTQ), 148–168 (LDFL…PIAH), 169–196 (LHLN…ILNT), 197–219 (KKLH…SVNT), 220–250 (LGCL…KGPS), 251–277 (LLNF…WTKP), 278–303 (VEYL…CKTA), 304–330 (LKAL…LFSE), 331–354 (MNIM…TRST), 355–378 (FKFL…TLVE), 379–404 (LETL…GMPS), 405–428 (LEIL…WVGS), 429–449 (ILML…CLPP), 450–473 (RVTV…SLET), 474–495 (LQEL…TFSS), and 496–519 (LSVL…SCQN). A disulfide bond links Cys117 and Cys139. N-linked (GlcNAc...) asparagine glycosylation is present at Asn144. Asn186 and Asn214 each carry an N-linked (GlcNAc...) asparagine glycan. Cysteines 235 and 265 form a disulfide. Asn253 and Asn285 each carry an N-linked (GlcNAc...) asparagine glycan. Cys348 and Cys373 are joined by a disulfide. The N-linked (GlcNAc...) asparagine glycan is linked to Asn372. Cys423 and Cys446 form a disulfide bridge. Asn433 carries N-linked (GlcNAc...) asparagine glycosylation. N-linked (GlcNAc...) asparagine glycosylation is present at Asn519. The LRRCT domain maps to 520 to 575 (ITSIKAGKNPFQCTCDLREFIKTISQMSSEVVKDWPDSYKCDYPESYKGTLLQDFH). Residues 588-608 (VTIGATMLVLVVTVTFLCIYL) traverse the membrane as a helical segment. At 609–789 (DLPWYIRMVY…INIKLMEEKK (181 aa)) the chain is on the cytoplasmic side. In terms of domain architecture, TIR spans 639–780 (LQFHAFISYS…LFWANLRAAI (142 aa)).

The protein belongs to the Toll-like receptor family. As to quaternary structure, homodimer (via cytoplasmic TIR domain). Heterodimer with TLR2 via their respective extracellular domains. Binds MYD88 via their respective TIR domains. Interacts with CD36, following CD36 stimulation by oxLDL or amyloid-beta 42, and forms a heterodimer with TLR4. The trimeric complex is internalized and triggers inflammatory response. LYN kinase activity facilitates TLR4:TLR6 heterodimerization and signal initiation. The heterodimer TLR2:TLR6 interacts with CD14 and CD36 in response to triacylated lipopeptides.

It localises to the cell membrane. It is found in the cytoplasmic vesicle. Its subcellular location is the phagosome membrane. The protein localises to the membrane raft. The protein resides in the golgi apparatus. Its function is as follows. Participates in the innate immune response to Gram-positive bacteria and fungi. Specifically recognizes diacylated and, to a lesser extent, triacylated lipopeptides. In response to diacylated lipopeptides, forms the activation cluster TLR2:TLR6:CD14:CD36, this cluster triggers signaling from the cell surface and subsequently is targeted to the Golgi in a lipid-raft dependent pathway. Acts via MYD88 and TRAF6, leading to NF-kappa-B activation, cytokine secretion and the inflammatory response. Recognizes mycoplasmal macrophage-activating lipopeptide-2kD (MALP-2), soluble tuberculosis factor (STF), phenol-soluble modulin (PSM) and B.burgdorferi outer surface protein A lipoprotein (OspA-L) cooperatively with TLR2. In complex with TLR4, promotes sterile inflammation in monocytes/macrophages in response to oxidized low-density lipoprotein (oxLDL) or amyloid-beta 42. In this context, the initial signal is provided by oxLDL- or amyloid-beta 42-binding to CD36. This event induces the formation of a heterodimer of TLR4 and TLR6, which is rapidly internalized and triggers inflammatory response, leading to the NF-kappa-B-dependent production of CXCL1, CXCL2 and CCL9 cytokines, via MYD88 signaling pathway, and CCL5 cytokine, via TICAM1 signaling pathway, as well as IL1B secretion. This Dasypus novemcinctus (Nine-banded armadillo) protein is Toll-like receptor 6 (TLR6).